We begin with the raw amino-acid sequence, 461 residues long: Putative dipeptidase CPSG_01350 (461 aa).

Over residues 1–10 (MSARDNEKGS) the composition is skewed to basic and acidic residues. The segment at 1 to 31 (MSARDNEKGSARSQPSHAAASEIENVPRPSR) is disordered. A helical membrane pass occupies residues 35-52 (WTGTMIKVFIICACAGIV). Residues His90, Asp92, and Glu203 each contribute to the Zn(2+) site. Cys142 and Cys232 are oxidised to a cystine. Residue His230 coordinates substrate. Positions 274 and 295 each coordinate Zn(2+). Residues Arg306 and Asp366 each coordinate substrate. N-linked (GlcNAc...) asparagine glycosylation is present at Asn379.

Belongs to the metallo-dependent hydrolases superfamily. Peptidase M19 family. It depends on Zn(2+) as a cofactor.

The protein resides in the membrane. The catalysed reaction is an L-aminoacyl-L-amino acid + H2O = 2 an L-alpha-amino acid. Functionally, hydrolyzes a wide range of dipeptides. The polypeptide is Putative dipeptidase CPSG_01350 (Coccidioides posadasii (strain RMSCC 757 / Silveira) (Valley fever fungus)).